A 162-amino-acid chain; its full sequence is Ubiquitin-fold modifier-conjugating enzyme 1 (162 aa).

C115 serves as the catalytic Glycyl thioester intermediate.

Belongs to the ubiquitin-conjugating enzyme family. UFC1 subfamily. As to quaternary structure, interacts with uba-5.

E2-like enzyme which forms an intermediate with ufm-1. The intermediate is formed via a thioester linkage. The protein is Ubiquitin-fold modifier-conjugating enzyme 1 of Caenorhabditis briggsae.